The sequence spans 525 residues: AarF domain-containing protein kinase 1 (525 aa).

A Protein kinase domain is found at 148 to 477 (SFDDTPLGAA…HKKRDAGSFF (330 aa)). ATP is bound by residues 154 to 162 (LGAASLAQV) and Lys176. The active-site Proton acceptor is Asp308.

The protein belongs to the protein kinase superfamily. ADCK protein kinase family.

Its subcellular location is the mitochondrion. Appears to be essential for maintaining mitochondrial cristae formation and mitochondrial function by acting via YME1L1 in a kinase-independent manner to regulate essential mitochondrial structural proteins OPA1 and IMMT. The action of this enzyme is not yet clear. It is not known if it has protein kinase activity and what type of substrate it would phosphorylate (Ser, Thr or Tyr). This chain is AarF domain-containing protein kinase 1 (Adck1), found in Mus musculus (Mouse).